A 66-amino-acid polypeptide reads, in one-letter code: Cold shock-like protein (66 aa).

The CSD domain maps to 3–62; that stretch reads GKVKWFDSKKGYGFITKDEGGDVFVHWSAIEMEGFKTLKEGQVVEFEIQEGKKGPQAAHV.

In terms of assembly, monomer.

Its subcellular location is the cytoplasm. This Thermotoga maritima (strain ATCC 43589 / DSM 3109 / JCM 10099 / NBRC 100826 / MSB8) protein is Cold shock-like protein (csp).